Here is a 569-residue protein sequence, read N- to C-terminus: Glutamate--tRNA ligase (569 aa).

The short motif at 107–117 is the 'HIGH' region element; sequence PEPNGYPHIGH.

This sequence belongs to the class-I aminoacyl-tRNA synthetase family. Glutamate--tRNA ligase type 2 subfamily.

Its subcellular location is the cytoplasm. It carries out the reaction tRNA(Glu) + L-glutamate + ATP = L-glutamyl-tRNA(Glu) + AMP + diphosphate. In terms of biological role, catalyzes the attachment of glutamate to tRNA(Glu) in a two-step reaction: glutamate is first activated by ATP to form Glu-AMP and then transferred to the acceptor end of tRNA(Glu). The polypeptide is Glutamate--tRNA ligase (Nitrosopumilus maritimus (strain SCM1)).